A 31-amino-acid polypeptide reads, in one-letter code: Dermaseptin-7.2TR (31 aa).

Glutamic acid 1-amide is present on Glu-31.

As to expression, expressed by the skin glands.

It localises to the secreted. In terms of biological role, has antimicrobial activity. In Phyllomedusa trinitatis (Trinidad leaf frog), this protein is Dermaseptin-7.2TR.